A 682-amino-acid chain; its full sequence is ATP-dependent zinc metalloprotease FtsH (682 aa).

Residues 1–7 lie on the Cytoplasmic side of the membrane; the sequence is MKQSHKT. The chain crosses the membrane as a helical span at residues 8–28; it reads ILLWALLIFLFVMIYNLISDG. The Periplasmic segment spans residues 29-138; that stretch reads TSGEETLDTT…YEVKAKEEST (110 aa). The helical transmembrane segment at 139–159 threads the bilayer; sequence FWQSLLISWLPMLLLFALFFF. Residues 160–682 are Cytoplasmic-facing; the sequence is FMRQLQAGGG…SGTDPEPEPA (523 aa). 232-239 lines the ATP pocket; it reads GPPGTGKT. Zn(2+) is bound at residue His-454. The active site involves Glu-455. Zn(2+) contacts are provided by His-458 and Asp-531. The segment at 638–682 is disordered; sequence LSRPAVVSKPSADAESSVDEDEREARPALFPPLGKSGTDPEPEPA.

The protein in the central section; belongs to the AAA ATPase family. This sequence in the C-terminal section; belongs to the peptidase M41 family. In terms of assembly, homohexamer. It depends on Zn(2+) as a cofactor.

It is found in the cell inner membrane. Acts as a processive, ATP-dependent zinc metallopeptidase for both cytoplasmic and membrane proteins. Plays a role in the quality control of integral membrane proteins. The chain is ATP-dependent zinc metalloprotease FtsH from Haliangium ochraceum (strain DSM 14365 / JCM 11303 / SMP-2).